A 359-amino-acid chain; its full sequence is POU domain, class 5, transcription factor 1B (359 aa).

2 disordered regions span residues 1 to 53 and 87 to 116; these read MAGH…GVGP and QGGL…EPCT. Serine 111 carries the post-translational modification Phosphoserine. The region spanning 138-212 is the POU-specific domain; that stretch reads DIKALQKELE…LLQKWVEEAD (75 aa). The segment at residues 229–288 is a DNA-binding region (homeobox); the sequence is ARKRKRTSIENRVRGNLENLFLQCPKPTLQISHIAQQLGLEKDVVRVWFCNRRQKGKRSS. The residue at position 235 (threonine 235) is a Phosphothreonine. A phosphoserine mark is found at serine 236, serine 288, and serine 289. The disordered stretch occupies residues 287–322; that stretch reads SSSDYAQREDFEAAGSPFSGGPVSFPPAPGPHFGTP. A compositionally biased stretch (low complexity) spans 299-309; the sequence is AAGSPFSGGPV. The residue at position 354 (serine 354) is a Phosphoserine.

This sequence belongs to the POU transcription factor family. Class-5 subfamily. In terms of tissue distribution, detected in epithelial cells of the prostate (at protein level). Detected at the mRNA level in several cancer tissues (breast, uterine cervix, lung, thyroid gland, esophagus, colon, urinary bladder, and glioma).

It is found in the nucleus. It localises to the cytoplasm. Its function is as follows. Shows weak transcriptional activator activity. This chain is POU domain, class 5, transcription factor 1B (POU5F1B), found in Homo sapiens (Human).